A 155-amino-acid polypeptide reads, in one-letter code: NADPH-dependent 7-cyano-7-deazaguanine reductase (155 aa).

Cys53 serves as the catalytic Thioimide intermediate. Asp60 (proton donor) is an active-site residue. Substrate is bound by residues 75 to 77 (VES) and 94 to 95 (HE).

It belongs to the GTP cyclohydrolase I family. QueF type 1 subfamily.

It is found in the cytoplasm. It carries out the reaction 7-aminomethyl-7-carbaguanine + 2 NADP(+) = 7-cyano-7-deazaguanine + 2 NADPH + 3 H(+). The protein operates within tRNA modification; tRNA-queuosine biosynthesis. Catalyzes the NADPH-dependent reduction of 7-cyano-7-deazaguanine (preQ0) to 7-aminomethyl-7-deazaguanine (preQ1). The protein is NADPH-dependent 7-cyano-7-deazaguanine reductase of Brucella abortus (strain S19).